An 879-amino-acid chain; its full sequence is Beta-alanyl-bioamine nonribosomal peptide synthetase ebony (879 aa).

The interval 26-540 is adenylation; the sequence is FEEQQLRHAD…EHVPLLVNGK (515 aa). A Carrier domain is found at 573–650; sequence EDLKLTARDL…EIIEKMAANH (78 aa). Serine 611 is modified (O-(pantetheine 4'-phosphoryl)serine). The condensation stretch occupies residues 666–679; that stretch reads LKMEAVPLRLEHRQ. Glutamate 696 is a dopamine binding site. Glutamate 696 provides a ligand contact to histamine. The beta-alanine site is built by threonine 825 and asparagine 827.

This sequence belongs to the NRP synthetase family. Pantetheine 4'-phosphate is required as a cofactor. Mg(2+) serves as cofactor. Expressed in the optic neuropils in the lamina and in distinct cells at the distal border of the medulla cortex (at protein level). Expressed in the protocerebrum and thoracic ganglia (at protein level). Expressed in antennal lobes, antennal nerves and subesophagic ganglion (at protein level). Specifically, expressed in epithelial glial cells of the medulla that surround the synaptic cleft of photoreceptor axonal endings (at protein level). Expressed in some cells in the cuticle.

It localises to the cytoplasm. The enzyme catalyses histamine + beta-alanine + ATP = carcinine + AMP + diphosphate + H(+). It carries out the reaction beta-alanine + ATP + H(+) = beta-alanyl-5'-AMP + diphosphate. It catalyses the reaction beta-alanyl-5'-AMP + holo-[peptidyl-carrier protein] = beta-alanyl-[peptidyl-carrier protein] + AMP + H(+). The catalysed reaction is beta-alanyl-[peptidyl-carrier protein] + histamine = carcinine + holo-[peptidyl-carrier protein] + H(+). The enzyme catalyses dopamine + beta-alanine + ATP = beta-alanyl-dopamine + AMP + diphosphate + H(+). It carries out the reaction beta-alanyl-[peptidyl-carrier protein] + dopamine = beta-alanyl-dopamine + holo-[peptidyl-carrier protein] + H(+). Its function is as follows. Nonribosomal peptide synthase which is required for the regulation of histamine and dopamine levels in various tissues through their condensation with beta-alanine. In epithelial glial cells, plays an essential role in the inactivation of histamine, the main neurotransmitter in the optical nerve system, by catalyzing the conversion of histamine into carcinine. In the cuticle, catalyzes the condensation of beta-alanine with dopamine to form beta-alanyl-dopamine (NBAD), a metabolite involved in the pigmentation and sclerotization of the insect cuticle. Also, regulates the cuticular hydrocarbon composition in females. Acts downstream of the body clock to regulate circadian behavioral rhythms. Can also condense beta-alanine with biogenic amines tyramine, octopamine, and serotonin in vitro. This chain is Beta-alanyl-bioamine nonribosomal peptide synthetase ebony, found in Drosophila melanogaster (Fruit fly).